A 786-amino-acid polypeptide reads, in one-letter code: Endonuclease MutS2 (786 aa).

ATP is bound at residue 335-342; it reads GPNTGGKT. The Smr domain maps to 711-786; the sequence is LDLRGERFEN…GLGVTVVELK (76 aa).

It belongs to the DNA mismatch repair MutS family. MutS2 subfamily. In terms of assembly, homodimer. Binds to stalled ribosomes, contacting rRNA.

Endonuclease that is involved in the suppression of homologous recombination and thus may have a key role in the control of bacterial genetic diversity. In terms of biological role, acts as a ribosome collision sensor, splitting the ribosome into its 2 subunits. Detects stalled/collided 70S ribosomes which it binds and splits by an ATP-hydrolysis driven conformational change. Acts upstream of the ribosome quality control system (RQC), a ribosome-associated complex that mediates the extraction of incompletely synthesized nascent chains from stalled ribosomes and their subsequent degradation. Probably generates substrates for RQC. This Bacillus cereus (strain ATCC 10987 / NRS 248) protein is Endonuclease MutS2.